The chain runs to 314 residues: BTB/POZ domain-containing protein KCTD17 (314 aa).

The 71-residue stretch at 24-94 (KWVRLNVGGT…LRHGKLVLDK (71 aa)) folds into the BTB domain. Residues 190–268 (STPNGLSSES…PAGGSRPHPL (79 aa)) form a disordered region. A coiled-coil region spans residues 196–239 (SSESSRKTKSTEEQLEEQQQQEEEVEEVEVEQVQVEADAQEKAQ). Residues 208–225 (EQLEEQQQQEEEVEEVEV) show a composition bias toward acidic residues.

In terms of assembly, homopentamer; forms a closed pentamer. Interacts with CUL3; interaction is direct and forms a 5:5 heterodecamer. Interacts with TCHP. Interacts with CUL3, as part of the BCR(KCTD17) E3 ubiquitin ligase complex, at least composed of CUL3, KCTD17 and RBX1. In terms of tissue distribution, highly expressed in brain. Highest expression is observed in the putamen and the thalamus.

It is found in the cytoplasm. In terms of biological role, substrate-adapter for CUL3-RING ubiquitin ligase complexes which mediates the ubiquitination and subsequent proteasomal degradation of TCHP, a protein involved in ciliogenesis down-regulation. Thereby, positively regulates ciliogenesis, playing a crucial role in the initial steps of axoneme extension. May also play a role in endoplasmic reticulum calcium ion homeostasis. This chain is BTB/POZ domain-containing protein KCTD17, found in Homo sapiens (Human).